The sequence spans 453 residues: Serine--tRNA ligase (453 aa).

252 to 254 is an L-serine binding site; the sequence is TAE. ATP contacts are provided by residues 283–285 and Val-299; that span reads RKE. Position 306 (Glu-306) interacts with L-serine. 370–373 is a binding site for ATP; sequence EMVS. Position 405 (Thr-405) interacts with L-serine.

Belongs to the class-II aminoacyl-tRNA synthetase family. Type-1 seryl-tRNA synthetase subfamily. Homodimer. The tRNA molecule binds across the dimer.

It localises to the cytoplasm. It carries out the reaction tRNA(Ser) + L-serine + ATP = L-seryl-tRNA(Ser) + AMP + diphosphate + H(+). The enzyme catalyses tRNA(Sec) + L-serine + ATP = L-seryl-tRNA(Sec) + AMP + diphosphate + H(+). Its pathway is aminoacyl-tRNA biosynthesis; selenocysteinyl-tRNA(Sec) biosynthesis; L-seryl-tRNA(Sec) from L-serine and tRNA(Sec): step 1/1. Functionally, catalyzes the attachment of serine to tRNA(Ser). Is also able to aminoacylate tRNA(Sec) with serine, to form the misacylated tRNA L-seryl-tRNA(Sec), which will be further converted into selenocysteinyl-tRNA(Sec). This Sulfurisphaera tokodaii (strain DSM 16993 / JCM 10545 / NBRC 100140 / 7) (Sulfolobus tokodaii) protein is Serine--tRNA ligase.